Reading from the N-terminus, the 436-residue chain is Xylose isomerase (436 aa).

Catalysis depends on residues His100 and Asp103. Positions 231, 267, 270, 295, 306, 308, and 338 each coordinate Mg(2+).

This sequence belongs to the xylose isomerase family. In terms of assembly, homotetramer. Mg(2+) is required as a cofactor.

Its subcellular location is the cytoplasm. The enzyme catalyses alpha-D-xylose = alpha-D-xylulofuranose. In Rhizobium etli (strain ATCC 51251 / DSM 11541 / JCM 21823 / NBRC 15573 / CFN 42), this protein is Xylose isomerase.